We begin with the raw amino-acid sequence, 212 residues long: Uracil phosphoribosyltransferase (212 aa).

5-phospho-alpha-D-ribose 1-diphosphate-binding positions include Arg-78, Arg-103, and 130-138 (DPMLATGSS). Residues Ile-193 and 198–200 (GDA) contribute to the uracil site. Asp-199 lines the 5-phospho-alpha-D-ribose 1-diphosphate pocket.

It belongs to the UPRTase family. Requires Mg(2+) as cofactor.

It carries out the reaction UMP + diphosphate = 5-phospho-alpha-D-ribose 1-diphosphate + uracil. It functions in the pathway pyrimidine metabolism; UMP biosynthesis via salvage pathway; UMP from uracil: step 1/1. Its activity is regulated as follows. Allosterically activated by GTP. Its function is as follows. Catalyzes the conversion of uracil and 5-phospho-alpha-D-ribose 1-diphosphate (PRPP) to UMP and diphosphate. This Pseudomonas fluorescens (strain SBW25) protein is Uracil phosphoribosyltransferase.